The sequence spans 266 residues: Non-structural maintenance of chromosomes element 1 homolog (266 aa).

The interaction with NSMCE3 stretch occupies residues 1–102; that stretch reads MQGSTRRAGA…SVSKMATDFA (102 aa). An RING-type; atypical zinc finger spans residues 191–232; sequence CNICHGLLIQGQSCETCGIRMHLPCVAKYFQSIPEPHCPHCN. The segment at 246–266 is disordered; that stretch reads EKEREAGISKSSRKSLRTRQH. The segment covering 256 to 266 has biased composition (basic residues); sequence SSRKSLRTRQH.

Belongs to the NSE1 family. As to quaternary structure, component of the SMC5-SMC6 complex which consists at least of SMC5, SMC6, NSMCE2, NSMCE1, NSMCE4A or EID3 and NSMCE3. NSMCE1, NSMCE4A or EID3 and NSMCE3 probably form a subcomplex that bridges the head domains of the SMC5-SMC6 heterodimer. Interacts with NSMCE3. In terms of processing, ubiquitinated.

It is found in the nucleus. The protein resides in the chromosome. Its subcellular location is the telomere. It carries out the reaction S-ubiquitinyl-[E2 ubiquitin-conjugating enzyme]-L-cysteine + [acceptor protein]-L-lysine = [E2 ubiquitin-conjugating enzyme]-L-cysteine + N(6)-ubiquitinyl-[acceptor protein]-L-lysine.. In terms of biological role, RING-type zinc finger-containing E3 ubiquitin ligase that assembles with melanoma antigen protein (MAGE) to catalyze the direct transfer of ubiquitin from E2 ubiquitin-conjugating enzyme to a specific substrate. Within MAGE-RING ubiquitin ligase complex, MAGE stimulates and specifies ubiquitin ligase activity likely through recruitment and/or stabilization of the E2 ubiquitin-conjugating enzyme at the E3:substrate complex. Involved in maintenance of genome integrity, DNA damage response and DNA repair. NSMCE3/MAGEG1 and NSMCE1 ubiquitin ligase are components of SMC5-SMC6 complex and may positively regulate homologous recombination-mediated DNA repair. This Mus musculus (Mouse) protein is Non-structural maintenance of chromosomes element 1 homolog (Nsmce1).